A 99-amino-acid polypeptide reads, in one-letter code: Putative transmembrane protein ORF13 (99 aa).

The next 3 membrane-spanning stretches (helical) occupy residues 8-28 (IATFGIGDTVTTIIGLSMAGI), 42-62 (LGLFGIIAAKVLYFGLMYIIV), and 73-93 (GPITITVLGTLICLWNIAIIA).

It is found in the host membrane. In His1 virus (isolate Australia/Victoria) (His1V), this protein is Putative transmembrane protein ORF13.